Consider the following 265-residue polypeptide: Phosphonoacetaldehyde hydrolase (265 aa).

Residue D9 is the Nucleophile of the active site. Mg(2+) contacts are provided by D9 and A11. The active-site Schiff-base intermediate with substrate is the K50. D184 is a binding site for Mg(2+).

This sequence belongs to the HAD-like hydrolase superfamily. PhnX family. Homodimer. Mg(2+) serves as cofactor.

It catalyses the reaction phosphonoacetaldehyde + H2O = acetaldehyde + phosphate + H(+). Its function is as follows. Involved in phosphonate degradation. This Lactiplantibacillus plantarum (strain ATCC BAA-793 / NCIMB 8826 / WCFS1) (Lactobacillus plantarum) protein is Phosphonoacetaldehyde hydrolase.